The sequence spans 248 residues: Cytochrome c oxidase subunit 2 (248 aa).

Residues 1–43 are Mitochondrial intermembrane-facing; it reads MTNLLNNWLIINQFGYDLPEPWQLGLQDAAHPVMEEIIFFHDQ. Residues 44-65 form a helical membrane-spanning segment; that stretch reads VMFILIIIITTVLWLIVKALSG. At 66 to 79 the chain is on the mitochondrial matrix side; sequence KAYHRYLVDGTLLE. A helical transmembrane segment spans residues 80-99; sequence IIWTIVPAIILILIAFPSLK. Residues 100–248 lie on the Mitochondrial intermembrane side of the membrane; sequence LLYLMDEVMD…INWVLSGSDE (149 aa). Cu cation is bound by residues His-180, Cys-215, Glu-217, Cys-219, His-223, and Met-226. Residue Glu-217 participates in Mg(2+) binding.

Belongs to the cytochrome c oxidase subunit 2 family. Component of the cytochrome c oxidase (complex IV, CIV), a multisubunit enzyme composed of a catalytic core of 3 subunits and several supernumerary subunits. The complex exists as a monomer or a dimer and forms supercomplexes (SCs) in the inner mitochondrial membrane with ubiquinol-cytochrome c oxidoreductase (cytochrome b-c1 complex, complex III, CIII). Requires Cu cation as cofactor.

It localises to the mitochondrion inner membrane. The enzyme catalyses 4 Fe(II)-[cytochrome c] + O2 + 8 H(+)(in) = 4 Fe(III)-[cytochrome c] + 2 H2O + 4 H(+)(out). Component of the cytochrome c oxidase, the last enzyme in the mitochondrial electron transport chain which drives oxidative phosphorylation. The respiratory chain contains 3 multisubunit complexes succinate dehydrogenase (complex II, CII), ubiquinol-cytochrome c oxidoreductase (cytochrome b-c1 complex, complex III, CIII) and cytochrome c oxidase (complex IV, CIV), that cooperate to transfer electrons derived from NADH and succinate to molecular oxygen, creating an electrochemical gradient over the inner membrane that drives transmembrane transport and the ATP synthase. Cytochrome c oxidase is the component of the respiratory chain that catalyzes the reduction of oxygen to water. Electrons originating from reduced cytochrome c in the intermembrane space (IMS) are transferred via the dinuclear copper A center (CU(A)) of subunit 2 and heme A of subunit 1 to the active site in subunit 1, a binuclear center (BNC) formed by heme A3 and copper B (CU(B)). The BNC reduces molecular oxygen to 2 water molecules using 4 electrons from cytochrome c in the IMS and 4 protons from the mitochondrial matrix. This Metridium senile (Brown sea anemone) protein is Cytochrome c oxidase subunit 2 (COII).